The primary structure comprises 434 residues: Homoserine dehydrogenase (434 aa).

NADPH-binding residues include Thr13 and Val14. Positions 14, 33, and 43 each coordinate NAD(+). Position 14 (Val14) interacts with NADP(+). Position 45 (Arg45) interacts with NADPH. NADP(+) is bound by residues Arg45, Arg46, and Lys103. NADPH is bound at residue Lys103. 4 residues coordinate Na(+): Glu127, Val130, Gly132, and Ile134. Residues Gly185 and Glu188 each coordinate NADP(+). The L-homoserine site is built by Glu188 and Asp199. Residue Lys203 is the Proton donor of the active site. Gly300 contributes to the NADPH binding site. Gly300 lines the NAD(+) pocket. Residue Gly300 participates in NADP(+) binding. Positions 353–429 constitute an ACT domain; sequence YLRIQAKDHP…GVSGPVVRIR (77 aa).

Belongs to the homoserine dehydrogenase family. Requires a metal cation as cofactor.

The enzyme catalyses L-homoserine + NADP(+) = L-aspartate 4-semialdehyde + NADPH + H(+). It catalyses the reaction L-homoserine + NAD(+) = L-aspartate 4-semialdehyde + NADH + H(+). It functions in the pathway amino-acid biosynthesis; L-methionine biosynthesis via de novo pathway; L-homoserine from L-aspartate: step 3/3. Its pathway is amino-acid biosynthesis; L-threonine biosynthesis; L-threonine from L-aspartate: step 3/5. With respect to regulation, feedback inhibition by threonine. Functionally, catalyzes the conversion of L-aspartate-beta-semialdehyde (L-Asa) to L-homoserine (L-Hse), the third step in the biosynthesis of threonine and methionine from aspartate. The polypeptide is Homoserine dehydrogenase (hom) (Pseudomonas aeruginosa (strain ATCC 15692 / DSM 22644 / CIP 104116 / JCM 14847 / LMG 12228 / 1C / PRS 101 / PAO1)).